We begin with the raw amino-acid sequence, 1478 residues long: Adhesion G protein-coupled receptor L2 (1478 aa).

Residues 1–25 form the signal peptide; it reads MVSSGCRMRSLWFIIIISFLPNTEG. Over 26-855 the chain is Extracellular; sequence FSRAALPFGL…VHELLLTVIT (830 aa). An SUEL-type lectin domain is found at 41–130; that stretch reads SCEGYSIDLR…KYLEVQYECV (90 aa). N-linked (GlcNAc...) asparagine glycosylation is present at asparagine 99. Residues 139–398 enclose the Olfactomedin-like domain; the sequence is VCPGTLKAIV…ILRYSLEFGP (260 aa). Cysteines 140 and 322 form a disulfide. Asparagine 335 carries N-linked (GlcNAc...) asparagine glycosylation. Residues 422 to 458 form a disordered region; sequence VSTTSTTSQKGPMSTTVAGSQEGSKGTKAPPAVSTTK. Residues 430–445 show a composition bias toward polar residues; that stretch reads QKGPMSTTVAGSQEGS. Residues asparagine 524, asparagine 633, asparagine 735, asparagine 748, asparagine 791, asparagine 796, and asparagine 817 are each glycosylated (N-linked (GlcNAc...) asparagine). Residues 663-841 enclose the GAIN-B domain; sequence TRVSMPTENI…AILMAHREIA (179 aa). Cystine bridges form between cysteine 792–cysteine 823 and cysteine 811–cysteine 825. The segment at 792-841 is GPS; it reads CSFWNYSERTMMGYWSTQGCKLVDTNKTRTTCACSHLTNFAILMAHREIA. The helical transmembrane segment at 856–876 threads the bilayer; it reads WVGIVISLVCLAICIFTFCFF. Residues 877-884 lie on the Cytoplasmic side of the membrane; that stretch reads RGLQSDRN. The helical transmembrane segment at 885–905 threads the bilayer; it reads TIHKNLCINLFIAEFIFLIGI. The Extracellular segment spans residues 906 to 911; sequence DKTKYM. The chain crosses the membrane as a helical span at residues 912–932; the sequence is IACPIFAGLLHFFFLAAFAWM. The Cytoplasmic segment spans residues 933-955; sequence CLEGVQLYLMLVEVFESEYSRKK. Residues 956-976 form a helical membrane-spanning segment; it reads YYYVAGYLFPATVVGVSAAID. Residues 977–994 lie on the Extracellular side of the membrane; the sequence is YKSYGTEKACWLHVDNYF. Residues 995–1015 traverse the membrane as a helical segment; sequence IWSFIGPVTFIILLNIIFLVI. Topologically, residues 1016 to 1056 are cytoplasmic; it reads TLCKMVKHSNTLKPDSSRLENINNYRVCDGYYNTDLPGSWV. Residues 1057 to 1077 form a helical membrane-spanning segment; the sequence is LGAFALLCLLGLTWSFGLLFI. The Extracellular portion of the chain corresponds to 1078-1081; sequence NEET. A helical transmembrane segment spans residues 1082–1102; it reads IVMAYLFTIFNAFQGVFIFIF. Residues 1103-1478 are Cytoplasmic-facing; the sequence is HCALQKKVRK…EGQMQLVTSL (376 aa). The disordered stretch occupies residues 1378-1419; that stretch reads AEDHLQSPNRDSLYTSMPNLRDSPYQESSPDMEEDLSPSRRS. The span at 1383 to 1395 shows a compositional bias: polar residues; sequence QSPNRDSLYTSMP. A phosphoserine mark is found at serine 1393, serine 1428, and serine 1449.

It belongs to the G-protein coupled receptor 2 family. Adhesion G-protein coupled receptor (ADGR) subfamily. In terms of assembly, heterodimer of 2 chains generated by proteolytic processing; the large extracellular N-terminal fragment and the membrane-bound C-terminal fragment predominantly remain associated and non-covalently linked. Autoproteolytically processed at the GPS region of the GAIN-B domain; this cleavage modulates receptor activity. Ubiquitously expressed.

The protein localises to the postsynaptic cell membrane. Forms a heterodimer of 2 chains generated by proteolytic processing that remain associated through non-covalent interactions mediated by the GAIN-B domain. In the inactivated receptor, the Stachel sequence (also named stalk) is embedded in the GAIN-B domain, where it adopts a beta-strand conformation. On activation, the Stachel moves into the 7 transmembrane region and adopts a twisted hook-shaped configuration that forms contacts within the receptor, leading to coupling of a G-alpha protein, which activates signaling. The cleaved GAIN-B and N-terminal domains can then dissociate from the rest of the receptor. In terms of biological role, orphan adhesion G-protein coupled receptor (aGPCR), which mediates synapse specificity. Ligand binding causes a conformation change that triggers signaling via guanine nucleotide-binding proteins (G proteins) and modulates the activity of downstream effectors. Following G-protein coupled receptor activation, associates with cell adhesion molecules that are expressed at the surface of adjacent cells to direct synapse specificity. Specifically mediates the establishment of perforant-path synapses on CA1-region pyramidal neurons in the hippocampus. Localizes to postsynaptic spines in excitatory synapses in the S.lacunosum-moleculare and interacts with presynaptic cell adhesion molecules, such as teneurins, promoting synapse formation. The polypeptide is Adhesion G protein-coupled receptor L2 (ADGRL2) (Bos taurus (Bovine)).